Reading from the N-terminus, the 264-residue chain is 3-methyl-2-oxobutanoate hydroxymethyltransferase (264 aa).

Asp45 and Asp84 together coordinate Mg(2+). Residues 45-46 (DS), Asp84, and Lys112 contribute to the 3-methyl-2-oxobutanoate site. Glu114 provides a ligand contact to Mg(2+). Glu181 acts as the Proton acceptor in catalysis.

It belongs to the PanB family. As to quaternary structure, homodecamer; pentamer of dimers. It depends on Mg(2+) as a cofactor.

The protein localises to the cytoplasm. It catalyses the reaction 3-methyl-2-oxobutanoate + (6R)-5,10-methylene-5,6,7,8-tetrahydrofolate + H2O = 2-dehydropantoate + (6S)-5,6,7,8-tetrahydrofolate. It participates in cofactor biosynthesis; (R)-pantothenate biosynthesis; (R)-pantoate from 3-methyl-2-oxobutanoate: step 1/2. Catalyzes the reversible reaction in which hydroxymethyl group from 5,10-methylenetetrahydrofolate is transferred onto alpha-ketoisovalerate to form ketopantoate. The protein is 3-methyl-2-oxobutanoate hydroxymethyltransferase of Escherichia coli O1:K1 / APEC.